We begin with the raw amino-acid sequence, 216 residues long: 3-keto-L-gulonate-6-phosphate decarboxylase UlaD (216 aa).

Aspartate 11 lines the substrate pocket. Positions 33 and 62 each coordinate Mg(2+). Arginine 192 provides a ligand contact to substrate.

This sequence belongs to the HPS/KGPDC family. KGPDC subfamily. In terms of assembly, homodimer. Mg(2+) serves as cofactor.

The catalysed reaction is 3-dehydro-L-gulonate 6-phosphate + H(+) = L-xylulose 5-phosphate + CO2. It functions in the pathway cofactor degradation; L-ascorbate degradation; D-xylulose 5-phosphate from L-ascorbate: step 2/4. Its function is as follows. Catalyzes the decarboxylation of 3-keto-L-gulonate-6-P into L-xylulose-5-P. Is involved in the anaerobic L-ascorbate utilization. The polypeptide is 3-keto-L-gulonate-6-phosphate decarboxylase UlaD (Escherichia coli O127:H6 (strain E2348/69 / EPEC)).